The following is a 235-amino-acid chain: Small ribosomal subunit protein uS3 (235 aa).

One can recognise a KH type-2 domain in the interval 39 to 107 (IRDFIKKECH…ELHLNIVEVR (69 aa)). Residues 213-235 (AARDRKAQELQDGPAPRGAGGRR) are disordered.

This sequence belongs to the universal ribosomal protein uS3 family. Part of the 30S ribosomal subunit. Forms a tight complex with proteins S10 and S14.

Binds the lower part of the 30S subunit head. Binds mRNA in the 70S ribosome, positioning it for translation. This Roseobacter denitrificans (strain ATCC 33942 / OCh 114) (Erythrobacter sp. (strain OCh 114)) protein is Small ribosomal subunit protein uS3.